Reading from the N-terminus, the 113-residue chain is MNTVRVAFLLVFVLAVSLGQADKDENRMEMQEKTEQGKSYLDFAENLLLQKLEELEAKLLEEDSEESRNSRQKRCIGEGVPCDENDPRCCSGLVCLKPTLHGIWYKSYYCYKK.

The signal sequence occupies residues 1 to 21 (MNTVRVAFLLVFVLAVSLGQA). A propeptide spanning residues 22–74 (DKDENRMEMQEKTEQGKSYLDFAENLLLQKLEELEAKLLEEDSEESRNSRQKR) is cleaved from the precursor. Residues 61 to 83 (EEDSEESRNSRQKRCIGEGVPCD) form a disordered region. 3 disulfide bridges follow: Cys-75/Cys-90, Cys-82/Cys-95, and Cys-89/Cys-110.

It belongs to the neurotoxin 14 (magi-1) family. 01 (HNTX-16) subfamily. As to expression, expressed by the venom gland.

Its subcellular location is the secreted. Functionally, probable ion channel inhibitor. The protein is U11-theraphotoxin-Hhn1a of Cyriopagopus hainanus (Chinese bird spider).